Here is a 250-residue protein sequence, read N- to C-terminus: Bis(5'-nucleosyl)-tetraphosphatase PrpE [asymmetrical] (250 aa).

Belongs to the PrpE family. It depends on Ni(2+) as a cofactor.

The catalysed reaction is P(1),P(4)-bis(5'-guanosyl) tetraphosphate + H2O = GMP + GTP + 2 H(+). Asymmetrically hydrolyzes Ap4p to yield AMP and ATP. This Oceanobacillus iheyensis (strain DSM 14371 / CIP 107618 / JCM 11309 / KCTC 3954 / HTE831) protein is Bis(5'-nucleosyl)-tetraphosphatase PrpE [asymmetrical].